Here is a 98-residue protein sequence, read N- to C-terminus: Serine rich endogenous peptide 10 (98 aa).

Residues 1-29 form the signal peptide; that stretch reads MERKKFSSKFIHLLIVFLLLCTFLSRTES. The disordered stretch occupies residues 50–98; it reads NSAIGTPSSTSDHAPGSNGRKLMSIYRPNGDIFTGPSGSGHGGGRTPAP. The span at 52-61 shows a compositional bias: polar residues; the sequence is AIGTPSSTSD. 2 consecutive short sequence motifs (SCOOP motif) follow at residues 52-66 and 80-94; these read AIGT…APGS and DIFT…GGGR. 2 consecutive short sequence motifs (sxS motif essential for MIK2 binding) follow at residues 58–60 and 86–88; these read STS and SGS. Positions 86-98 are enriched in gly residues; that stretch reads SGSGHGGGRTPAP.

The protein belongs to the serine rich endogenous peptide (SCOOP) phytocytokine family. Interacts with MIK2 (via extracellular leucine-rich repeat domain); this interaction triggers the formation of complex between MIK2 and the BAK1/SERK3 and SERK4 coreceptors, and subsequent BAK1 activation by phosphorylation. As to expression, mostly expressed in leaves and seedlings shoots, to a lower extent, in roots, but barely in flowers.

It is found in the cell membrane. It localises to the secreted. Its subcellular location is the extracellular space. The protein localises to the apoplast. Its function is as follows. Brassicaceae-specific phytocytokine (plant endogenous peptide released into the apoplast) perceived by MIK2 in a BAK1/SERK3 and SERK4 coreceptors-dependent manner, that modulates various physiological and antimicrobial processes including growth prevention and reactive oxygen species (ROS) response regulation. Inhibits root growth and regulates root meristems. Promotes ROS production and MAPK (e.g. MPK3, MPK4 and MPK6) activation in a MIK2-dependent manner, thus leading to the up-regulation of immune-related marker genes (e.g. WRKY30, WRKY33 and CYP81F2). The sequence is that of Serine rich endogenous peptide 10 from Arabidopsis thaliana (Mouse-ear cress).